A 336-amino-acid chain; its full sequence is Ketol-acid reductoisomerase (NADP(+)) (336 aa).

Residues 1–181 (MKVYYDQDAD…GGGRSGIIET (181 aa)) enclose the KARI N-terminal Rossmann domain. NADP(+) contacts are provided by residues 24-27 (YGSQ), Arg-47, Ser-50, and Ser-52. His-107 is an active-site residue. Gly-133 is an NADP(+) binding site. Positions 182–327 (SFREETETDL…ERLRGMMPWI (146 aa)) constitute a KARI C-terminal knotted domain. Residues Asp-190, Glu-194, Glu-226, and Glu-230 each contribute to the Mg(2+) site. Substrate is bound at residue Ser-251.

The protein belongs to the ketol-acid reductoisomerase family. The cofactor is Mg(2+).

The enzyme catalyses (2R)-2,3-dihydroxy-3-methylbutanoate + NADP(+) = (2S)-2-acetolactate + NADPH + H(+). It carries out the reaction (2R,3R)-2,3-dihydroxy-3-methylpentanoate + NADP(+) = (S)-2-ethyl-2-hydroxy-3-oxobutanoate + NADPH + H(+). It functions in the pathway amino-acid biosynthesis; L-isoleucine biosynthesis; L-isoleucine from 2-oxobutanoate: step 2/4. Its pathway is amino-acid biosynthesis; L-valine biosynthesis; L-valine from pyruvate: step 2/4. Functionally, involved in the biosynthesis of branched-chain amino acids (BCAA). Catalyzes an alkyl-migration followed by a ketol-acid reduction of (S)-2-acetolactate (S2AL) to yield (R)-2,3-dihydroxy-isovalerate. In the isomerase reaction, S2AL is rearranged via a Mg-dependent methyl migration to produce 3-hydroxy-3-methyl-2-ketobutyrate (HMKB). In the reductase reaction, this 2-ketoacid undergoes a metal-dependent reduction by NADPH to yield (R)-2,3-dihydroxy-isovalerate. This chain is Ketol-acid reductoisomerase (NADP(+)), found in Halorhodospira halophila (strain DSM 244 / SL1) (Ectothiorhodospira halophila (strain DSM 244 / SL1)).